A 159-amino-acid polypeptide reads, in one-letter code: 4-deoxy-4-sulfo-D-erythrose isomerase (159 aa).

The active-site Proton acceptor is the Cys-66.

This sequence belongs to the LacAB/RpiB family.

The enzyme catalyses 4-deoxy-4-sulfo-D-erythrose = 4-deoxy-4-sulfo-D-erythrulose. Functionally, part of the sulfo-TK pathway, a D-sulfoquinovose degradation pathway that produces 2-hydroxyethane-1-sulfonate (isethionate). Catalyzes the isomerization of 4-deoxy-4-sulfo-D-erythrose (SE) to 4-deoxy-4-sulfo-D-erythrulose (SEu). This chain is 4-deoxy-4-sulfo-D-erythrose isomerase, found in Clostridium sp. (strain MSTE9).